A 265-amino-acid chain; its full sequence is MQYGDKTTFKQSLAIQGRVINALLMREIITRYGRQNIGFFWLFVEPLLMTFFIVMMWKFIRADKFSTLNMIAFVMTGYPMAMMWRNASNRAIGSISANLSLLYHRNVRVLDTIFTRVLLEVAGASIAQILFMAILVMIDWIDAPHDVFYMLIAWFLMAMFAFGLGLIICAIAQQFDVFGKIWGTLSFVLLPISGAFFFVHNLPAQAQSIALWFPMIHGTEMFRHGYFGDTVVTYESIGFLVVSDLALLLLGLVMVKNFSKGVEPQ.

The next 6 helical transmembrane spans lie at 37-57 (IGFFWLFVEPLLMTFFIVMMW), 64-84 (KFSTLNMIAFVMTGYPMAMMW), 118-138 (LLEVAGASIAQILFMAILVMI), 151-171 (LIAWFLMAMFAFGLGLIICAI), 178-198 (FGKIWGTLSFVLLPISGAFFF), and 235-255 (ESIGFLVVSDLALLLLGLVMV). Positions 37-258 (IGFFWLFVEP…LLGLVMVKNF (222 aa)) constitute an ABC transmembrane type-2 domain.

This sequence belongs to the ABC-2 integral membrane protein family.

The protein localises to the cell inner membrane. Its function is as follows. May form an ATP-driven capsule polysaccharide export apparatus, in association with the BexA, BexC and BexD proteins. The polypeptide is Capsule polysaccharide export inner-membrane protein BexB (bexB) (Haemophilus influenzae).